We begin with the raw amino-acid sequence, 186 residues long: Ribosome-recycling factor (186 aa).

This sequence belongs to the RRF family.

Its subcellular location is the cytoplasm. Its function is as follows. Responsible for the release of ribosomes from messenger RNA at the termination of protein biosynthesis. May increase the efficiency of translation by recycling ribosomes from one round of translation to another. The protein is Ribosome-recycling factor of Bartonella henselae (strain ATCC 49882 / DSM 28221 / CCUG 30454 / Houston 1) (Rochalimaea henselae).